Here is a 573-residue protein sequence, read N- to C-terminus: E3 ubiquitin-protein ligase RNF168 (573 aa).

The RING-type zinc-finger motif lies at 16–55 (CQICVEILFEPVTLPCNHTLCKPCFESTVEKASLCCPFCR). Ser-70 carries the post-translational modification Phosphoserine. Residues 110–128 (LSKPGELRREYEEEISKVE) carry the LR motif 1 motif. Residues 143 to 151 (EEYIQKLLA) carry the UMI motif motif. 2 disordered regions span residues 153 to 174 (EEEE…QLKS) and 196 to 277 (ASPL…EDMP). Over residues 157–174 (EKRQAEKRHREMEEQLKS) the composition is skewed to basic and acidic residues. The MIU motif 1 motif lies at 168 to 191 (MEEQLKSDEELARRLSLDINNFCE). Ser-197 is subject to Phosphoserine. Residue Lys-210 forms a Glycyl lysine isopeptide (Lys-Gly) (interchain with G-Cter in SUMO2) linkage. The segment covering 231–243 (PKSQLGSASQSEV) has biased composition (polar residues). Residues 245–261 (QEDRKSSMSKKIDDNSD) show a composition bias toward basic and acidic residues. Position 363 is a phosphothreonine (Thr-363). Ser-416 is subject to Phosphoserine. An MIU motif 2 motif is present at residues 440-463 (RHKQEKQDRLLALQLQEEVDQEQM). The interval 456–528 (EEVDQEQMRP…NHQQPSFKIQ (73 aa)) is disordered. Basic and acidic residues predominate over residues 461–470 (EQMRPDRQKG). The LR motif 2 motif lies at 467-478 (RQKGSPDGYQLR). Phosphoserine is present on Ser-471. Positions 494–519 (NSRDRNSKRQTELEQPKPRTDSKNEN) are enriched in basic and acidic residues. Residue Lys-530 forms a Glycyl lysine isopeptide (Lys-Gly) (interchain with G-Cter in SUMO2) linkage. The interval 540–573 (NSTNDNCNVSKTAHSLQPSKSQKSIFQMFQRVTK) is disordered.

This sequence belongs to the RNF168 family. In terms of assembly, monomer. Interacts with UBE2N/UBC13. Sumoylated with SUMO1 by PIAS4 in response to double-strand breaks (DSBs). In terms of processing, ubiquitinated.

It localises to the nucleus. It carries out the reaction S-ubiquitinyl-[E2 ubiquitin-conjugating enzyme]-L-cysteine + [acceptor protein]-L-lysine = [E2 ubiquitin-conjugating enzyme]-L-cysteine + N(6)-ubiquitinyl-[acceptor protein]-L-lysine.. Its pathway is protein modification; protein ubiquitination. Its function is as follows. E3 ubiquitin-protein ligase required for accumulation of repair proteins to sites of DNA damage. Acts with UBE2N/UBC13 to amplify the RNF8-dependent histone ubiquitination. Recruited to sites of DNA damage at double-strand breaks (DSBs) by binding to ubiquitinated histone H2A and H2AX and amplifies the RNF8-dependent H2A ubiquitination, promoting the formation of 'Lys-63'-linked ubiquitin conjugates. This leads to concentrate ubiquitinated histones H2A and H2AX at DNA lesions to the threshold required for recruitment of TP53BP1 and BRCA1. Also recruited at DNA interstrand cross-links (ICLs) sites and promotes accumulation of 'Lys-63'-linked ubiquitination of histones H2A and H2AX, leading to recruitment of FAAP20 and Fanconi anemia (FA) complex, followed by interstrand cross-link repair. H2A ubiquitination also mediates the ATM-dependent transcriptional silencing at regions flanking DSBs in cis, a mechanism to avoid collision between transcription and repair intermediates. Also involved in class switch recombination in immune system, via its role in regulation of DSBs repair. Following DNA damage, promotes the ubiquitination and degradation of JMJD2A/KDM4A in collaboration with RNF8, leading to unmask H4K20me2 mark and promote the recruitment of TP53BP1 at DNA damage sites. Not able to initiate 'Lys-63'-linked ubiquitination in vitro; possibly due to partial occlusion of the UBE2N/UBC13-binding region. Catalyzes monoubiquitination of 'Lys-13' and 'Lys-15' of nucleosomal histone H2A (H2AK13Ub and H2AK15Ub, respectively). The sequence is that of E3 ubiquitin-protein ligase RNF168 from Bos taurus (Bovine).